A 1323-amino-acid chain; its full sequence is PH domain leucine-rich repeat-containing protein phosphatase 2 (1323 aa).

In terms of domain architecture, PH spans 150-248 (RILLSGIYNV…WQRQASKVVS (99 aa)). LRR repeat units follow at residues 250 to 271 (RISTVDLSCYSLEEVPEHLFYS), 273 to 296 (DITYLNLRHNFMQLERPGGLDTLY), 300 to 321 (QLKGLNLSHNKLGLFPILLCEI), 323 to 344 (TLTELNLSCNGFHDLPSQIGNL), 346 to 368 (NLQTLCLDGNFLTTLPEELGNLQ), 369 to 390 (QLSSLGISFNNFSQIPEVYEKL), 392 to 412 (MLDRVVMAGNCLEVLNLGVLN), 416 to 439 (HIKHVDLRMNHLKTMVIENLEGNK), 440 to 460 (HITHVDLRDNRLTDLDLSSLC), 461 to 480 (SLEQLHCGRNQLRELTLSGF), 481 to 502 (SLRTLYASSNRLTAVNVYPVPS), 503 to 524 (LLTFLDLSRNLLECVPDWACEA), 526 to 547 (KIEVLDVSYNLLTEVPVRILSS), 549 to 570 (SLRKLMLGHNHVQNLPTLVEHI), 571 to 592 (PLEVLDLQHNALTRLPDTLFSK), 595 to 616 (NLRYLNASANSLESLPSACTGE), 621 to 644 (MLQLLYLTNNLLTDQCIPVLVGHL), 645 to 666 (HLRILHLANNQLQTFPASKLNK), 669 to 690 (QLEELNLSGNKLKTIPTTIANC), 692 to 713 (RLHTLVAHSNNISIFPEILQLP), 714 to 735 (QIQFVDLSCNDLTEILIPEALP), and 737 to 758 (TLQDLDLTGNTNLVLEHKTLDI). Residues 785 to 1033 (SHGLAEMAGQ…DNVGAMVVYL (249 aa)) enclose the PPM-type phosphatase domain. Mn(2+) is bound by residues Asp-820, Gly-821, Lys-985, and Asp-1024. The segment at 1060–1157 (TIKDAPKPAT…DSDDDQPVEG (98 aa)) is disordered. A compositionally biased stretch (low complexity) spans 1071–1097 (SSSSGIASEFSSEMSTSEVSSEVGSTA). A compositionally biased stretch (polar residues) spans 1122-1146 (PTPTSGLFQRQPSSATFSSNQSDNG). Ser-1210 carries the phosphoserine modification. The segment at 1285 to 1323 (HDLEEEVKEQMKQHQDSRLEPEPHEEDRTEPPEEFDTAL) is disordered. Basic and acidic residues predominate over residues 1292–1315 (KEQMKQHQDSRLEPEPHEEDRTEP).

In terms of assembly, interacts with AKT1, AKT3 and PRKCB isoform beta-II. Interacts with STK4, RPS6KB1, RAF1. Interacts with FKBP5; FKBP5 acts as a scaffold for PHLPP2 and Akt. Interacts with NHERF1; NHERF1 scaffolds a heterotrimeric complex with PTEN. Mn(2+) serves as cofactor. In colorectal cancer tissue, expression is highest in the surface epithelium of normal colonic mucosa adjacent to the cancer tissue but is largely excluded from the crypt bases. Expression is lost or significantly decreased in 80% of tested tumors (at protein level).

It localises to the cytoplasm. The protein resides in the membrane. The protein localises to the nucleus. The catalysed reaction is O-phospho-L-seryl-[protein] + H2O = L-seryl-[protein] + phosphate. It catalyses the reaction O-phospho-L-threonyl-[protein] + H2O = L-threonyl-[protein] + phosphate. With respect to regulation, inhibited by AKT1, AKT2 and AKT3. Activated by oleic acid and arachidonic acid. Its function is as follows. Protein phosphatase involved in regulation of Akt and PKC signaling. Mediates dephosphorylation in the C-terminal domain hydrophobic motif of members of the AGC Ser/Thr protein kinase family; specifically acts on 'Ser-473' of AKT1, 'Ser-660' of PRKCB isoform beta-II and 'Ser-657' of PRKCA. Akt regulates the balance between cell survival and apoptosis through a cascade that primarily alters the function of transcription factors that regulate pro- and antiapoptotic genes. Dephosphorylation of 'Ser-473' of Akt triggers apoptosis and decreases cell proliferation. Also controls the phosphorylation of AKT3. Dephosphorylates STK4 on 'Thr-387' leading to STK4 activation and apoptosis. Dephosphorylates RPS6KB1 and is involved in regulation of cap-dependent translation. Inhibits cancer cell proliferation and may act as a tumor suppressor. Dephosphorylation of PRKCA and PRKCB leads to their destabilization and degradation. Dephosphorylates RAF1 inhibiting its kinase activity. This is PH domain leucine-rich repeat-containing protein phosphatase 2 (PHLPP2) from Homo sapiens (Human).